The following is a 102-amino-acid chain: Co-chaperonin GroES (102 aa).

The protein belongs to the GroES chaperonin family. In terms of assembly, heptamer of 7 subunits arranged in a ring. Interacts with the chaperonin GroEL.

It is found in the cytoplasm. Together with the chaperonin GroEL, plays an essential role in assisting protein folding. The GroEL-GroES system forms a nano-cage that allows encapsulation of the non-native substrate proteins and provides a physical environment optimized to promote and accelerate protein folding. GroES binds to the apical surface of the GroEL ring, thereby capping the opening of the GroEL channel. This is Co-chaperonin GroES from Anabaena sp. (strain L31).